The sequence spans 341 residues: Phosphoribosylformylglycinamidine cyclo-ligase (341 aa).

The protein belongs to the AIR synthase family.

It is found in the cytoplasm. It catalyses the reaction 2-formamido-N(1)-(5-O-phospho-beta-D-ribosyl)acetamidine + ATP = 5-amino-1-(5-phospho-beta-D-ribosyl)imidazole + ADP + phosphate + H(+). It functions in the pathway purine metabolism; IMP biosynthesis via de novo pathway; 5-amino-1-(5-phospho-D-ribosyl)imidazole from N(2)-formyl-N(1)-(5-phospho-D-ribosyl)glycinamide: step 2/2. This chain is Phosphoribosylformylglycinamidine cyclo-ligase, found in Synechococcus elongatus (strain ATCC 33912 / PCC 7942 / FACHB-805) (Anacystis nidulans R2).